A 215-amino-acid polypeptide reads, in one-letter code: Adenylate kinase (215 aa).

Glycine 10 to threonine 15 is an ATP binding site. The interval serine 30–valine 59 is NMP. AMP is bound by residues threonine 31, arginine 36, glutamate 57 to valine 59, glycine 85 to arginine 88, and glutamine 92. An LID region spans residues glycine 126–aspartate 162. Arginine 127 provides a ligand contact to ATP. Residues cysteine 130 and cysteine 132 each contribute to the Zn(2+) site. Serine 135–tyrosine 136 contributes to the ATP binding site. The Zn(2+) site is built by cysteine 149 and cysteine 152. Residues arginine 159 and arginine 170 each contribute to the AMP site. Glycine 198 contacts ATP.

The protein belongs to the adenylate kinase family. As to quaternary structure, monomer.

The protein localises to the cytoplasm. It catalyses the reaction AMP + ATP = 2 ADP. It functions in the pathway purine metabolism; AMP biosynthesis via salvage pathway; AMP from ADP: step 1/1. Catalyzes the reversible transfer of the terminal phosphate group between ATP and AMP. Plays an important role in cellular energy homeostasis and in adenine nucleotide metabolism. The protein is Adenylate kinase of Methanococcoides burtonii (strain DSM 6242 / NBRC 107633 / OCM 468 / ACE-M).